We begin with the raw amino-acid sequence, 258 residues long: Cytochrome b-c1 complex subunit Rieske-1, mitochondrial (258 aa).

The transit peptide at 1-46 (WPVRSAAPSSSAFISANHFSSDDDSSSPRSISPSLASVFLHHTRGF) directs the protein to the mitochondrion. At 47-95 (SSNSVSPAHDMGLVPDLPPTVAAIKNPTSKIVYDEHNHERYPPGDPSKR) the chain is on the mitochondrial matrix side. A helical membrane pass occupies residues 96 to 118 (AFAYFVLTGGRFVYASLMRLLIL). The Mitochondrial intermembrane segment spans residues 119 to 258 (KFVLSMSASK…FLEENKLLIG (140 aa)). One can recognise a Rieske domain in the interval 161–256 (RRRTEDDISL…YSFLEENKLL (96 aa)). [2Fe-2S] cluster-binding residues include Cys-201, His-203, Cys-220, and His-223. Cys-206 and Cys-222 are oxidised to a cystine.

The protein belongs to the Rieske iron-sulfur protein family. As to quaternary structure, component of the ubiquinol-cytochrome c oxidoreductase (cytochrome b-c1 complex, complex III, CIII), a multisubunit enzyme composed of 3 respiratory subunits cytochrome b, cytochrome c1 and Rieske protein, 2 core protein subunits, and several low-molecular weight protein subunits. The complex exists as an obligatory dimer and forms supercomplexes (SCs) in the inner mitochondrial membrane with cytochrome c oxidase (complex IV, CIV). The cofactor is [2Fe-2S] cluster.

The protein localises to the mitochondrion inner membrane. The enzyme catalyses a quinol + 2 Fe(III)-[cytochrome c](out) = a quinone + 2 Fe(II)-[cytochrome c](out) + 2 H(+)(out). Functionally, component of the ubiquinol-cytochrome c oxidoreductase, a multisubunit transmembrane complex that is part of the mitochondrial electron transport chain which drives oxidative phosphorylation. The respiratory chain contains 3 multisubunit complexes succinate dehydrogenase (complex II, CII), ubiquinol-cytochrome c oxidoreductase (cytochrome b-c1 complex, complex III, CIII) and cytochrome c oxidase (complex IV, CIV), that cooperate to transfer electrons derived from NADH and succinate to molecular oxygen, creating an electrochemical gradient over the inner membrane that drives transmembrane transport and the ATP synthase. The cytochrome b-c1 complex catalyzes electron transfer from ubiquinol to cytochrome c, linking this redox reaction to translocation of protons across the mitochondrial inner membrane, with protons being carried across the membrane as hydrogens on the quinol. In the process called Q cycle, 2 protons are consumed from the matrix, 4 protons are released into the intermembrane space and 2 electrons are passed to cytochrome c. The Rieske protein is a catalytic core subunit containing a [2Fe-2S] iron-sulfur cluster. It cycles between 2 conformational states during catalysis to transfer electrons from the quinol bound in the Q(0) site in cytochrome b to cytochrome c1. This chain is Cytochrome b-c1 complex subunit Rieske-1, mitochondrial, found in Nicotiana tabacum (Common tobacco).